The sequence spans 291 residues: Sulfotransferase 1A1 (291 aa).

44–49 provides a ligand contact to 3'-phosphoadenylyl sulfate; it reads KSGTNW. 102 to 104 is a binding site for substrate; sequence KTH. The active-site Proton acceptor is the H104. 3'-phosphoadenylyl sulfate contacts are provided by residues R126, S134, Y189, 223–228, and 251–255; these read TSFKKM and FMRKG. S134 carries the phosphoserine modification.

The protein belongs to the sulfotransferase 1 family. As to quaternary structure, homodimer. As to expression, expressed in brain, colon, liver, and small intestine of mice colonized with B.ovatus and L.plantarum.

The protein localises to the cytoplasm. The enzyme catalyses a phenol + 3'-phosphoadenylyl sulfate = an aryl sulfate + adenosine 3',5'-bisphosphate + H(+). The catalysed reaction is 17beta-estradiol + 3'-phosphoadenylyl sulfate = 17beta-estradiol 3-sulfate + adenosine 3',5'-bisphosphate + H(+). It carries out the reaction 4-ethylphenol + 3'-phosphoadenylyl sulfate = 4-ethylphenyl sulfate + adenosine 3',5'-bisphosphate + H(+). It catalyses the reaction 4-nitrophenol + 3'-phosphoadenylyl sulfate = 4-nitrophenyl sulfate + adenosine 3',5'-bisphosphate. The enzyme catalyses dopamine + 3'-phosphoadenylyl sulfate = dopamine 3-O-sulfate + adenosine 3',5'-bisphosphate + H(+). The catalysed reaction is dopamine + 3'-phosphoadenylyl sulfate = dopamine 4-O-sulfate + adenosine 3',5'-bisphosphate + H(+). It carries out the reaction 3,3',5-triiodo-L-thyronine + 3'-phosphoadenylyl sulfate = 3,3',5-triiodo-L-thyronine sulfate + adenosine 3',5'-bisphosphate + H(+). It catalyses the reaction 3,3',5'-triiodo-L-thyronine + 3'-phosphoadenylyl sulfate = 3,3',5'-triiodo-L-thyronine sulfate + adenosine 3',5'-bisphosphate + H(+). The enzyme catalyses 3,3'-diiodo-L-thyronine + 3'-phosphoadenylyl sulfate = 3,3'-diiodo-L-thyronine sulfate + adenosine 3',5'-bisphosphate + H(+). The catalysed reaction is L-thyroxine + 3'-phosphoadenylyl sulfate = L-thyroxine sulfate + adenosine 3',5'-bisphosphate + H(+). Sulfotransferase that utilizes 3'-phospho-5'-adenylyl sulfate (PAPS) as sulfonate donor to catalyze the sulfate conjugation of a wide variety of acceptor molecules bearing a hydroxyl or an amine group. Sulfonation increases the water solubility of most compounds, and therefore their renal excretion, but it can also result in bioactivation to form active metabolites. Displays broad substrate specificity for small phenolic compounds. Plays an important role in the sulfonation of endogenous molecules such as steroid hormones. Mediates also the metabolic activation of carcinogenic N-hydroxyarylamines leading to highly reactive intermediates capable of forming DNA adducts, potentially resulting in mutagenesis. May play a role in gut microbiota-host metabolic interaction. O-sulfonates 4-ethylphenol (4-EP), a dietary tyrosine-derived metabolite produced by gut bacteria. The product 4-EPS crosses the blood-brain barrier and may negatively regulate oligodendrocyte maturation and myelination, affecting the functional connectivity of different brain regions associated with the limbic system. Catalyzes the sulfate conjugation of dopamine. Catalyzes the sulfation of T4 (L-thyroxine/3,5,3',5'-tetraiodothyronine), T3 (3,5,3'-triiodothyronine), rT3 (3,3',5'-triiodothyronine) and 3,3'-T2 (3,3'-diiodothyronine), with a substrate preference of 3,3'-T2 &gt; rT3 &gt; T3 &gt; T4. This Mus musculus (Mouse) protein is Sulfotransferase 1A1 (Sult1a1).